A 355-amino-acid chain; its full sequence is Phosphoserine aminotransferase (355 aa).

Arginine 41 is an L-glutamate binding site. Pyridoxal 5'-phosphate is bound by residues 75-76, tryptophan 99, threonine 147, aspartate 166, and glutamine 189; that span reads AS. Lysine 190 is modified (N6-(pyridoxal phosphate)lysine). 231-232 provides a ligand contact to pyridoxal 5'-phosphate; it reads NT.

This sequence belongs to the class-V pyridoxal-phosphate-dependent aminotransferase family. SerC subfamily. Homodimer. Pyridoxal 5'-phosphate is required as a cofactor.

The protein resides in the cytoplasm. The catalysed reaction is O-phospho-L-serine + 2-oxoglutarate = 3-phosphooxypyruvate + L-glutamate. It catalyses the reaction 4-(phosphooxy)-L-threonine + 2-oxoglutarate = (R)-3-hydroxy-2-oxo-4-phosphooxybutanoate + L-glutamate. The protein operates within amino-acid biosynthesis; L-serine biosynthesis; L-serine from 3-phospho-D-glycerate: step 2/3. Its pathway is cofactor biosynthesis; pyridoxine 5'-phosphate biosynthesis; pyridoxine 5'-phosphate from D-erythrose 4-phosphate: step 3/5. Catalyzes the reversible conversion of 3-phosphohydroxypyruvate to phosphoserine and of 3-hydroxy-2-oxo-4-phosphonooxybutanoate to phosphohydroxythreonine. The polypeptide is Phosphoserine aminotransferase (Parabacteroides distasonis (strain ATCC 8503 / DSM 20701 / CIP 104284 / JCM 5825 / NCTC 11152)).